A 336-amino-acid chain; its full sequence is Ribosomal RNA large subunit methyltransferase F (336 aa).

It belongs to the methyltransferase superfamily. METTL16/RlmF family.

The protein localises to the cytoplasm. It catalyses the reaction adenosine(1618) in 23S rRNA + S-adenosyl-L-methionine = N(6)-methyladenosine(1618) in 23S rRNA + S-adenosyl-L-homocysteine + H(+). Specifically methylates the adenine in position 1618 of 23S rRNA. The protein is Ribosomal RNA large subunit methyltransferase F of Yersinia pseudotuberculosis serotype I (strain IP32953).